Consider the following 738-residue polypeptide: Ethylene receptor (738 aa).

3 consecutive transmembrane segments (helical) span residues Ile-22 to Val-42, Val-53 to Trp-73, and Val-91 to Leu-111. 2 residues coordinate Cu cation: Cys-64 and His-68. The region spanning Asp-157–Leu-305 is the GAF domain. Residues Val-348–Ile-585 enclose the Histidine kinase domain. A Phosphohistidine; by autocatalysis modification is found at His-351. Residues Lys-613–Leu-730 form the Response regulatory domain. At Asp-661 the chain carries 4-aspartylphosphate.

This sequence belongs to the ethylene receptor family. As to quaternary structure, homodimer; disulfide-linked. It depends on Cu cation as a cofactor. In terms of processing, activation probably requires a transfer of a phosphate group between a His in the transmitter domain and an Asp of the receiver domain.

The protein localises to the endoplasmic reticulum membrane. The catalysed reaction is ATP + protein L-histidine = ADP + protein N-phospho-L-histidine.. Functionally, may act early in the ethylene signal transduction pathway, possibly as an ethylene receptor, or as a regulator of the pathway. In Nicotiana tabacum (Common tobacco), this protein is Ethylene receptor (ETR1).